The sequence spans 310 residues: Olfactory receptor 2A12 (310 aa).

The Extracellular portion of the chain corresponds to 1-24 (MESNQTWITEVILLGFQVDPALEL). N-linked (GlcNAc...) asparagine glycosylation occurs at N4. Residues 25–48 (FLFGFFLLFYSLTLMGNGIILGLI) traverse the membrane as a helical segment. Topologically, residues 49–56 (YLDSRLHT) are cytoplasmic. Residues 57–78 (PMYVFLSHLAIVDMSYASSTVP) traverse the membrane as a helical segment. The Extracellular segment spans residues 79–99 (KMLANLVMHKKVISFAPCILQ). The cysteines at positions 96 and 188 are disulfide-linked. Residues 100–119 (TFLYLAFAITECLILVMMCY) traverse the membrane as a helical segment. Residues 120–138 (DRYVAICHPLQYTLIMNWR) lie on the Cytoplasmic side of the membrane. The helical transmembrane segment at 139-157 (VCTVLASTCWIFSFLLALV) threads the bilayer. Residues 158–194 (HITLILRLPFCGPQKINHFFCQIMSVFKLACADTRLN) are Extracellular-facing. The chain crosses the membrane as a helical span at residues 195–218 (QVVLFAGSAFILVGPLCLVLVSYL). Residues 219–235 (HILVAILRIQSGEGRRK) lie on the Cytoplasmic side of the membrane. Residues 236 to 258 (AFSTCSSHLCVVGLFFGSAIVMY) traverse the membrane as a helical segment. The Extracellular segment spans residues 259 to 271 (MAPKSSHSQERRK). The chain crosses the membrane as a helical span at residues 272–291 (ILSLFYSLFNPILNPLIYSL). Residues 292 to 310 (RNAEVKGALKRVLWKQRSM) are Cytoplasmic-facing.

The protein belongs to the G-protein coupled receptor 1 family.

The protein localises to the cell membrane. Odorant receptor. This is Olfactory receptor 2A12 (OR2A12) from Homo sapiens (Human).